The chain runs to 353 residues: Dihydroorotate dehydrogenase (quinone) (353 aa).

FMN is bound by residues 67-71 and T91; that span reads AGFDK. Residue K71 participates in substrate binding. 116-120 serves as a coordination point for substrate; sequence NRMGF. Residues N144 and N177 each coordinate FMN. N177 contacts substrate. The active-site Nucleophile is S180. A substrate-binding site is contributed by N182. Positions 213 and 241 each coordinate FMN. 242–243 contributes to the substrate binding site; the sequence is NT. FMN contacts are provided by residues G265, G294, and 315–316; that span reads YT.

This sequence belongs to the dihydroorotate dehydrogenase family. Type 2 subfamily. As to quaternary structure, monomer. FMN is required as a cofactor.

Its subcellular location is the cell membrane. It catalyses the reaction (S)-dihydroorotate + a quinone = orotate + a quinol. It participates in pyrimidine metabolism; UMP biosynthesis via de novo pathway; orotate from (S)-dihydroorotate (quinone route): step 1/1. Catalyzes the conversion of dihydroorotate to orotate with quinone as electron acceptor. The sequence is that of Dihydroorotate dehydrogenase (quinone) from Mycobacteroides abscessus (strain ATCC 19977 / DSM 44196 / CCUG 20993 / CIP 104536 / JCM 13569 / NCTC 13031 / TMC 1543 / L948) (Mycobacterium abscessus).